We begin with the raw amino-acid sequence, 105 residues long: Small ribosomal subunit protein eS26 (105 aa).

This sequence belongs to the eukaryotic ribosomal protein eS26 family. As to quaternary structure, component of the small ribosomal subunit.

The protein resides in the cytoplasm. This Encephalitozoon cuniculi (strain GB-M1) (Microsporidian parasite) protein is Small ribosomal subunit protein eS26 (RPS26).